The following is a 248-amino-acid chain: Pulmonary surfactant-associated protein A (248 aa).

A signal peptide spans 1 to 20; the sequence is MSLCSLAFTLFLTVVAGIKC. Residues 28–100 form the Collagen-like domain; that stretch reads GSPGIPGAPG…PGERGLPGFP (73 aa). 4-hydroxyproline is present on residues P30, P33, P36, P42, P54, P57, P63, P67, P70, and P76. The tract at residues 31–99 is disordered; the sequence is GIPGAPGNHG…EPGERGLPGF (69 aa). Positions 42-51 are enriched in basic and acidic residues; that stretch reads PGRDGRDGVK. Pro residues predominate over residues 54 to 65; it reads PGPPGPMGPPGG. Over residues 69–82 the composition is skewed to low complexity; sequence LPGRDGLPGAPGAP. Positions 84–93 are enriched in basic and acidic residues; that stretch reads ERGDKGEPGE. The 116-residue stretch at 133 to 248 folds into the C-type lectin domain; that stretch reads SVGDKVFSTN…LQYRLAVCEF (116 aa). Intrachain disulfides connect C155-C246 and C224-C238. The N-linked (GlcNAc...) asparagine glycan is linked to N207. Ca(2+)-binding residues include E215, R217, N234, and D235.

It belongs to the SFTPA family. Oligomeric complex of 6 set of homotrimers.

It localises to the secreted. The protein localises to the extracellular space. Its subcellular location is the extracellular matrix. It is found in the surface film. Functionally, in presence of calcium ions, it binds to surfactant phospholipids and contributes to lower the surface tension at the air-liquid interface in the alveoli of the mammalian lung and is essential for normal respiration. Enhances the expression of MYO18A/SP-R210 on alveolar macrophages. In Rattus norvegicus (Rat), this protein is Pulmonary surfactant-associated protein A (Sftpa1).